The chain runs to 103 residues: Large ribosomal subunit protein mL41 (103 aa).

The protein belongs to the mitochondrion-specific ribosomal protein mL41 family. In terms of assembly, component of the mitochondrial large ribosomal subunit (mt-LSU). Mature N.crassa 74S mitochondrial ribosomes consist of a small (37S) and a large (54S) subunit. The 37S small subunit contains a 16S ribosomal RNA (16S mt-rRNA) and 32 different proteins. The 54S large subunit contains a 23S rRNA (23S mt-rRNA) and 42 different proteins.

The protein localises to the mitochondrion. In terms of biological role, component of the mitochondrial ribosome (mitoribosome), a dedicated translation machinery responsible for the synthesis of mitochondrial genome-encoded proteins, including at least some of the essential transmembrane subunits of the mitochondrial respiratory chain. The mitoribosomes are attached to the mitochondrial inner membrane and translation products are cotranslationally integrated into the membrane. This is Large ribosomal subunit protein mL41 (mrpl27) from Neurospora crassa (strain ATCC 24698 / 74-OR23-1A / CBS 708.71 / DSM 1257 / FGSC 987).